The primary structure comprises 417 residues: Gamma-glutamyl phosphate reductase (417 aa).

The protein belongs to the gamma-glutamyl phosphate reductase family.

The protein localises to the cytoplasm. The catalysed reaction is L-glutamate 5-semialdehyde + phosphate + NADP(+) = L-glutamyl 5-phosphate + NADPH + H(+). Its pathway is amino-acid biosynthesis; L-proline biosynthesis; L-glutamate 5-semialdehyde from L-glutamate: step 2/2. Its function is as follows. Catalyzes the NADPH-dependent reduction of L-glutamate 5-phosphate into L-glutamate 5-semialdehyde and phosphate. The product spontaneously undergoes cyclization to form 1-pyrroline-5-carboxylate. The chain is Gamma-glutamyl phosphate reductase from Escherichia coli O17:K52:H18 (strain UMN026 / ExPEC).